The sequence spans 553 residues: Protein TIC 55, chloroplastic (553 aa).

The transit peptide at M1–A60 directs the protein to the chloroplast. The Stromal segment spans residues A61 to Q492. The Rieske domain occupies W103–V208. [2Fe-2S] cluster-binding residues include C144, H146, C163, and H166. Residues H257 and H262 each coordinate Fe cation. Residues I493 to S513 form a helical membrane-spanning segment. Residues G514 to K518 lie on the Chloroplast intermembrane side of the membrane. The chain crosses the membrane as a helical span at residues V519–I539. Residues A540–L553 lie on the Stromal side of the membrane.

As to quaternary structure, part of the Tic complex. Interacts with TIC62 and TIC110. [2Fe-2S] cluster is required as a cofactor.

It localises to the plastid. The protein localises to the chloroplast inner membrane. Its function is as follows. Involved in protein precursor import into chloroplasts. Part of the redox regulon consisting of TIC32, TIC 55 and TIC62. This chain is Protein TIC 55, chloroplastic (TIC55), found in Pisum sativum (Garden pea).